The sequence spans 555 residues: Urocanate hydratase (555 aa).

NAD(+) is bound by residues 52 to 53 (GG), glutamine 130, 176 to 178 (GMG), glutamate 196, arginine 201, 242 to 243 (NA), 263 to 267 (QTSAH), 273 to 274 (YL), and tyrosine 322. The active site involves cysteine 410. Glycine 492 contacts NAD(+).

The protein belongs to the urocanase family. The cofactor is NAD(+).

It localises to the cytoplasm. The enzyme catalyses 4-imidazolone-5-propanoate = trans-urocanate + H2O. It participates in amino-acid degradation; L-histidine degradation into L-glutamate; N-formimidoyl-L-glutamate from L-histidine: step 2/3. Its function is as follows. Catalyzes the conversion of urocanate to 4-imidazolone-5-propionate. The sequence is that of Urocanate hydratase from Shewanella putrefaciens (strain CN-32 / ATCC BAA-453).